Here is a 417-residue protein sequence, read N- to C-terminus: Gamma-glutamyl phosphate reductase (417 aa).

Belongs to the gamma-glutamyl phosphate reductase family.

The protein localises to the cytoplasm. The enzyme catalyses L-glutamate 5-semialdehyde + phosphate + NADP(+) = L-glutamyl 5-phosphate + NADPH + H(+). It functions in the pathway amino-acid biosynthesis; L-proline biosynthesis; L-glutamate 5-semialdehyde from L-glutamate: step 2/2. In terms of biological role, catalyzes the NADPH-dependent reduction of L-glutamate 5-phosphate into L-glutamate 5-semialdehyde and phosphate. The product spontaneously undergoes cyclization to form 1-pyrroline-5-carboxylate. The sequence is that of Gamma-glutamyl phosphate reductase from Streptococcus agalactiae serotype III (strain NEM316).